A 257-amino-acid polypeptide reads, in one-letter code: Receptor expression-enhancing protein 4 (257 aa).

Transmembrane regions (helical) follow at residues Met1 to Tyr21 and Trp42 to Phe62. 2 positions are modified to phosphoserine: Ser152 and Ser194. The interval Val177–Ser257 is disordered. Position 196 is a phosphothreonine (Thr196). Residues Ser202 and Ser253 each carry the phosphoserine modification.

This sequence belongs to the DP1 family.

The protein resides in the endoplasmic reticulum membrane. Its function is as follows. Microtubule-binding protein required to ensure proper cell division and nuclear envelope reassembly by sequestering the endoplasmic reticulum away from chromosomes during mitosis. Probably acts by clearing the endoplasmic reticulum membrane from metaphase chromosomes. This is Receptor expression-enhancing protein 4 (Reep4) from Mus musculus (Mouse).